A 173-amino-acid polypeptide reads, in one-letter code: 3-hydroxydecanoyl-[acyl-carrier-protein] dehydratase (173 aa).

His-71 is an active-site residue.

It belongs to the thioester dehydratase family. FabA subfamily. As to quaternary structure, homodimer.

It localises to the cytoplasm. It catalyses the reaction a (3R)-hydroxyacyl-[ACP] = a (2E)-enoyl-[ACP] + H2O. It carries out the reaction (3R)-hydroxydecanoyl-[ACP] = (2E)-decenoyl-[ACP] + H2O. The catalysed reaction is (2E)-decenoyl-[ACP] = (3Z)-decenoyl-[ACP]. Its pathway is lipid metabolism; fatty acid biosynthesis. Necessary for the introduction of cis unsaturation into fatty acids. Catalyzes the dehydration of (3R)-3-hydroxydecanoyl-ACP to E-(2)-decenoyl-ACP and then its isomerization to Z-(3)-decenoyl-ACP. Can catalyze the dehydratase reaction for beta-hydroxyacyl-ACPs with saturated chain lengths up to 16:0, being most active on intermediate chain length. This chain is 3-hydroxydecanoyl-[acyl-carrier-protein] dehydratase, found in Bradyrhizobium sp. (strain ORS 278).